A 148-amino-acid polypeptide reads, in one-letter code: SsrA-binding protein (148 aa).

It belongs to the SmpB family.

It is found in the cytoplasm. Functionally, required for rescue of stalled ribosomes mediated by trans-translation. Binds to transfer-messenger RNA (tmRNA), required for stable association of tmRNA with ribosomes. tmRNA and SmpB together mimic tRNA shape, replacing the anticodon stem-loop with SmpB. tmRNA is encoded by the ssrA gene; the 2 termini fold to resemble tRNA(Ala) and it encodes a 'tag peptide', a short internal open reading frame. During trans-translation Ala-aminoacylated tmRNA acts like a tRNA, entering the A-site of stalled ribosomes, displacing the stalled mRNA. The ribosome then switches to translate the ORF on the tmRNA; the nascent peptide is terminated with the 'tag peptide' encoded by the tmRNA and targeted for degradation. The ribosome is freed to recommence translation, which seems to be the essential function of trans-translation. This Ehrlichia canis (strain Jake) protein is SsrA-binding protein.